Reading from the N-terminus, the 581-residue chain is Meiotic PUF family protein 1 (581 aa).

The region spanning 225 to 580 (FPNGTTEPFE…RIAALVEKSK (356 aa)) is the PUM-HD domain. 8 Pumilio repeats span residues 291 to 326 (TILP…SFSY), 327 to 362 (FLKK…NLIE), 363 to 398 (ELIE…GIFD), 403 to 438 (KMQG…TCLD), 439 to 474 (EIIN…RILN), 475 to 510 (SLLK…RYVK), 518 to 554 (ELPT…LMAE), and 555 to 581 (HLKK…KSKS).

In terms of biological role, RNA-binding protein essential for meiotic progression. This Schizosaccharomyces pombe (strain 972 / ATCC 24843) (Fission yeast) protein is Meiotic PUF family protein 1 (mpf1).